Consider the following 299-residue polypeptide: Putative peptidyl-prolyl cis-trans isomerase HP_0175 (299 aa).

Residues 1 to 21 (MKKNILNLALVGALSTSFLMA) form the signal peptide. The region spanning 154–253 (KQEAHARHIL…FGYHIIYLIS (100 aa)) is the PpiC domain.

The enzyme catalyses [protein]-peptidylproline (omega=180) = [protein]-peptidylproline (omega=0). The protein is Putative peptidyl-prolyl cis-trans isomerase HP_0175 of Helicobacter pylori (strain ATCC 700392 / 26695) (Campylobacter pylori).